A 332-amino-acid polypeptide reads, in one-letter code: 4-hydroxy-3-methylbut-2-enyl diphosphate reductase (332 aa).

C34 provides a ligand contact to [4Fe-4S] cluster. H63 and H96 together coordinate (2E)-4-hydroxy-3-methylbut-2-enyl diphosphate. Positions 63 and 96 each coordinate dimethylallyl diphosphate. Isopentenyl diphosphate contacts are provided by H63 and H96. Residue C118 coordinates [4Fe-4S] cluster. (2E)-4-hydroxy-3-methylbut-2-enyl diphosphate is bound at residue H146. H146 serves as a coordination point for dimethylallyl diphosphate. H146 provides a ligand contact to isopentenyl diphosphate. E148 serves as the catalytic Proton donor. Residue T186 participates in (2E)-4-hydroxy-3-methylbut-2-enyl diphosphate binding. Residue C216 coordinates [4Fe-4S] cluster. (2E)-4-hydroxy-3-methylbut-2-enyl diphosphate is bound by residues S244, S245, N246, and S289. The dimethylallyl diphosphate site is built by S244, S245, N246, and S289. Isopentenyl diphosphate contacts are provided by S244, S245, N246, and S289.

This sequence belongs to the IspH family. Requires [4Fe-4S] cluster as cofactor.

The catalysed reaction is isopentenyl diphosphate + 2 oxidized [2Fe-2S]-[ferredoxin] + H2O = (2E)-4-hydroxy-3-methylbut-2-enyl diphosphate + 2 reduced [2Fe-2S]-[ferredoxin] + 2 H(+). It catalyses the reaction dimethylallyl diphosphate + 2 oxidized [2Fe-2S]-[ferredoxin] + H2O = (2E)-4-hydroxy-3-methylbut-2-enyl diphosphate + 2 reduced [2Fe-2S]-[ferredoxin] + 2 H(+). Its pathway is isoprenoid biosynthesis; dimethylallyl diphosphate biosynthesis; dimethylallyl diphosphate from (2E)-4-hydroxy-3-methylbutenyl diphosphate: step 1/1. It functions in the pathway isoprenoid biosynthesis; isopentenyl diphosphate biosynthesis via DXP pathway; isopentenyl diphosphate from 1-deoxy-D-xylulose 5-phosphate: step 6/6. Catalyzes the conversion of 1-hydroxy-2-methyl-2-(E)-butenyl 4-diphosphate (HMBPP) into a mixture of isopentenyl diphosphate (IPP) and dimethylallyl diphosphate (DMAPP). Acts in the terminal step of the DOXP/MEP pathway for isoprenoid precursor biosynthesis. The polypeptide is 4-hydroxy-3-methylbut-2-enyl diphosphate reductase (Mycobacterium leprae (strain TN)).